Here is a 693-residue protein sequence, read N- to C-terminus: DNA ligase (693 aa).

Residues 35–39, 84–85, and Glu121 each bind NAD(+); these read DAEYD and SI. The N6-AMP-lysine intermediate role is filled by Lys123. The NAD(+) site is built by Arg144, Glu180, Lys297, and Lys321. Residues Cys418, Cys421, Cys436, and Cys442 each contribute to the Zn(2+) site. Positions 601 to 690 constitute a BRCT domain; that stretch reads PASGSVAGLT…EQSPINNKDG (90 aa).

This sequence belongs to the NAD-dependent DNA ligase family. LigA subfamily. The cofactor is Mg(2+). Mn(2+) is required as a cofactor.

It catalyses the reaction NAD(+) + (deoxyribonucleotide)n-3'-hydroxyl + 5'-phospho-(deoxyribonucleotide)m = (deoxyribonucleotide)n+m + AMP + beta-nicotinamide D-nucleotide.. Functionally, DNA ligase that catalyzes the formation of phosphodiester linkages between 5'-phosphoryl and 3'-hydroxyl groups in double-stranded DNA using NAD as a coenzyme and as the energy source for the reaction. It is essential for DNA replication and repair of damaged DNA. This Azoarcus sp. (strain BH72) protein is DNA ligase.